A 441-amino-acid chain; its full sequence is Glutamyl-tRNA reductase (441 aa).

Substrate-binding positions include 49–52 (TCNR), serine 109, 114–116 (EGQ), and glutamine 120. Cysteine 50 (nucleophile) is an active-site residue. 198–203 (GAGRMS) is a binding site for NADP(+).

This sequence belongs to the glutamyl-tRNA reductase family. As to quaternary structure, homodimer.

It carries out the reaction (S)-4-amino-5-oxopentanoate + tRNA(Glu) + NADP(+) = L-glutamyl-tRNA(Glu) + NADPH + H(+). Its pathway is porphyrin-containing compound metabolism; protoporphyrin-IX biosynthesis; 5-aminolevulinate from L-glutamyl-tRNA(Glu): step 1/2. It functions in the pathway porphyrin-containing compound metabolism; chlorophyll biosynthesis. Functionally, catalyzes the NADPH-dependent reduction of glutamyl-tRNA(Glu) to glutamate 1-semialdehyde (GSA). In Prochlorococcus marinus (strain NATL2A), this protein is Glutamyl-tRNA reductase.